A 489-amino-acid chain; its full sequence is MALSSIEHYLSYHLRVLLPQVLSSKSSHNIAYIFALFAAITSGFVSLISLYAQPWQEHLSYSSWQINMIVTVINMGMYLTPPILGIIADIHGPITLSLSSVLGFIPSYAYLAYTFHRDHSFTNESDGSFTPTLVCFFIIGVATSGLYFSALITCAKLFPGTKLLSISIPTTCYGLSSLIGSQFLRVKYFHPVDYPYLDLGRVFKAFAWIYTVIGVMIWIATSKVAQIQHEADIMEEQDRMAEPSDNDVENHYDDNEQSRLLHATHAQQMTLMKVFRDPVLYIFGATIFCALGPLEMFIANMGSLTNVLAGGHEPAMSSALLSIYALTSTLTRLGTGLTVDYFNKRQLSVKWILLLFLVVGLVTQGKIYMLSMSSLDHSHMVTINRKLFYIGIMQGIAYGGLFTIYPTITLMVWGEKMFGTAYGTLMIAPALGSALSCLIYADVYDSECANSTTRSCIAPVYETTALEFCAAILLTVVVTVLWRKRRTHI.

The next 3 membrane-spanning stretches (helical) occupy residues 30-50, 68-88, and 92-112; these read IAYIFALFAAITSGFVSLISL, MIVTVINMGMYLTPPILGIIA, and GPITLSLSSVLGFIPSYAYLA. N-linked (GlcNAc...) asparagine glycosylation occurs at N123. 8 helical membrane-spanning segments follow: residues 132 to 152, 163 to 183, 202 to 222, 279 to 299, 307 to 327, 351 to 371, 388 to 408, and 421 to 441; these read TLVCFFIIGVATSGLYFSALI, LLSISIPTTCYGLSSLIGSQF, VFKAFAWIYTVIGVMIWIATS, VLYIFGATIFCALGPLEMFIA, VLAGGHEPAMSSALLSIYALT, WILLLFLVVGLVTQGKIYMLS, FYIGIMQGIAYGGLFTIYPTI, and AYGTLMIAPALGSALSCLIYA. Residue N450 is glycosylated (N-linked (GlcNAc...) asparagine). The helical transmembrane segment at 462–482 threads the bilayer; the sequence is ETTALEFCAAILLTVVVTVLW.

This sequence belongs to the major facilitator superfamily.

The protein localises to the vacuole membrane. Probable transporter. This Candida glabrata (strain ATCC 2001 / BCRC 20586 / JCM 3761 / NBRC 0622 / NRRL Y-65 / CBS 138) (Yeast) protein is Probable transporter MCH1 (MCH1).